The primary structure comprises 313 residues: uncharacterized protein (313 aa).

It to B.subtilis YqxC and T.hyodysenteriae hemolysin TlyA.

This is an uncharacterized protein from Bacillus subtilis (strain 168).